We begin with the raw amino-acid sequence, 153 residues long: ORM1-like protein 3 (153 aa).

The interval 1-17 (MNVGTAHSEVNPNTRVM) is important for ceramide level-sensing. Residues 1-21 (MNVGTAHSEVNPNTRVMNSRG) are Cytoplasmic-facing. Transmembrane regions (helical) follow at residues 22–42 (IWLS…SIPF) and 43–63 (VSVP…MYIF). Residues 64–94 (LHTVKGTPFETPDQGKARLLTHWEQMDYGVQ) are Cytoplasmic-facing. The helical transmembrane segment at 95 to 117 (FTASRKFLTITPIVLYFLTSFYT) threads the bilayer. The Extracellular portion of the chain corresponds to 118 to 121 (KYDQ). The chain crosses the membrane as a helical span at residues 122–142 (IHFVLNTVSLMSVLIPKLPQL). P137 bears the Hydroxyproline mark. The Cytoplasmic portion of the chain corresponds to 143–153 (HGVRIFGINKY).

It belongs to the ORM family. Ceramide-sensitive subunit of the serine palmitoyltransferase (SPT) complex, which is also composed of SPTLC1, SPTLC2/3 and SPTSSA/B. In terms of processing, when hydroxylated at Pro-137, ubiquitinated via 'Lys-48'-linkage, leading to proteasomal degradation. In endothelial cells, ORMDL3 proteasomal degradation is controlled by the sphingosine 1-phosphate receptor signaling pathway.

The protein resides in the endoplasmic reticulum membrane. Functionally, plays an essential role in the homeostatic regulation of sphingolipid de novo biosynthesis by modulating the activity of the serine palmitoyltransferase (SPT) in response to ceramide levels. When complexed to SPT, the binding of ceramides to its N-terminus stabilizes a conformation that block SPT substrate entry, hence preventing SPT catalytic activity. Through this mechanism, maintains ceramide levels at sufficient concentrations for the production of complex sphingolipids, but which prevents the accumulation of ceramides to levels that trigger apoptosis. This is ORM1-like protein 3 (ORMDL3) from Ailuropoda melanoleuca (Giant panda).